Consider the following 340-residue polypeptide: MYG1 protein C27H6.8 (340 aa).

Belongs to the MYG1 family.

The sequence is that of MYG1 protein C27H6.8 from Caenorhabditis elegans.